Consider the following 234-residue polypeptide: Ribose-5-phosphate isomerase A (234 aa).

Substrate-binding positions include Ser35–Thr38, Asp91–Asp94, and Lys105–Gly108. Glu114 acts as the Proton acceptor in catalysis. Residue Lys132 participates in substrate binding.

This sequence belongs to the ribose 5-phosphate isomerase family. In terms of assembly, homodimer.

It catalyses the reaction aldehydo-D-ribose 5-phosphate = D-ribulose 5-phosphate. Its pathway is carbohydrate degradation; pentose phosphate pathway; D-ribose 5-phosphate from D-ribulose 5-phosphate (non-oxidative stage): step 1/1. Its function is as follows. Catalyzes the reversible conversion of ribose-5-phosphate to ribulose 5-phosphate. This chain is Ribose-5-phosphate isomerase A, found in Methanococcus aeolicus (strain ATCC BAA-1280 / DSM 17508 / OCM 812 / Nankai-3).